Here is a 353-residue protein sequence, read N- to C-terminus: Melanin-concentrating hormone receptor 1 (353 aa).

Residues 1–45 lie on the Extracellular side of the membrane; sequence MDLQASLLSTGPNASNISDGQDNFTLAGPPPRTRSVSYINIIMPS. Asn13, Asn16, and Asn23 each carry an N-linked (GlcNAc...) asparagine glycan. A helical transmembrane segment spans residues 46-66; sequence VFGTICLLGIVGNSTVIFAVV. The Cytoplasmic portion of the chain corresponds to 67–79; it reads KKSKLHWCSNVPD. The helical transmembrane segment at 80-100 threads the bilayer; that stretch reads IFIINLSVVDLLFLLGMPFMI. Topologically, residues 101-116 are extracellular; sequence HQLMGNGVWHFGETMC. Cys116 and Cys194 form a disulfide bridge. Residues 117–139 traverse the membrane as a helical segment; the sequence is TLITAMDANSQFTSTYILTAMAI. At 140–161 the chain is on the cytoplasmic side; it reads DRYLATVHPISSTKFRKPSMAT. The helical transmembrane segment at 162-182 threads the bilayer; it reads LVICLLWALSFISITPVWLYA. Residues 183–204 lie on the Extracellular side of the membrane; it reads RLIPFPGGAVGCGIRLPNPDTD. The helical transmembrane segment at 205-225 threads the bilayer; that stretch reads LYWFTLYQFFLAFALPFVVIT. The Cytoplasmic portion of the chain corresponds to 226 to 256; sequence AAYVKILQRMTSSVAPASQRSIRLRTKRVTR. A helical transmembrane segment spans residues 257–277; the sequence is TAIAICLVFFVCWAPYYVLQL. Residues 278-294 are Extracellular-facing; it reads TQLSISRPTLTFVYLYN. Residues 295 to 315 form a helical membrane-spanning segment; that stretch reads AAISLGYANSCLNPFVYIVLC. Topologically, residues 316–353 are cytoplasmic; that stretch reads ETFRKRLVLSVKPAAQGQLRTVSNAQTADEERTESKGT.

This sequence belongs to the G-protein coupled receptor 1 family. In terms of assembly, interacts with NCDN. As to expression, expressed predominantly in the brain. Expression in brain is negatively regulated by leptin. Also found in the epithelium of the tongue and kidney.

It localises to the cell membrane. In terms of biological role, receptor for melanin-concentrating hormone, coupled to both G proteins that inhibit adenylyl cyclase and G proteins that activate phosphoinositide hydrolysis. The sequence is that of Melanin-concentrating hormone receptor 1 from Mus musculus (Mouse).